The primary structure comprises 440 residues: Xaa-Pro dipeptidase (440 aa).

Mn(2+) is bound by residues Asp246, Asp257, His337, Glu382, and Glu421.

It belongs to the peptidase M24B family. Bacterial-type prolidase subfamily. It depends on Mn(2+) as a cofactor.

It carries out the reaction Xaa-L-Pro dipeptide + H2O = an L-alpha-amino acid + L-proline. In terms of biological role, splits dipeptides with a prolyl residue in the C-terminal position. This chain is Xaa-Pro dipeptidase, found in Aeromonas hydrophila subsp. hydrophila (strain ATCC 7966 / DSM 30187 / BCRC 13018 / CCUG 14551 / JCM 1027 / KCTC 2358 / NCIMB 9240 / NCTC 8049).